A 500-amino-acid polypeptide reads, in one-letter code: Melanopsin-like (500 aa).

Residues 1–65 (MSHHSSWRGH…TVDVPDHAHY (65 aa)) are Extracellular-facing. Residue Asn-18 is glycosylated (N-linked (GlcNAc...) asparagine). The chain crosses the membrane as a helical span at residues 66 to 86 (IIGSVILIVGITGVIGNALVV). The Cytoplasmic segment spans residues 87–101 (YVFCRSRTLRTAGNM). A helical transmembrane segment spans residues 102-122 (FIVNLAVADFLMSVTQSPVFF). At 123–138 (AASLHRRWVFGERPCE) the chain is on the extracellular side. Cys-137 and Cys-215 are oxidised to a cystine. Residues 139–159 (LYAFCGALFGICSMMTLTAIA) traverse the membrane as a helical segment. The Cytoplasmic segment spans residues 160 to 182 (ADRCLAITQPLALVSRVSRRKAG). The helical transmembrane segment at 183–203 (AVLVVVWLYSLGWSLPPFFGW) threads the bilayer. Over 204–232 (SAYVPEGLQTSCSWDYMTFTPSVRAYTIL) the chain is Extracellular. The chain crosses the membrane as a helical span at residues 233-253 (LFVFVFFIPLGIIGSCYFAIF). At 254–286 (QTIRAAGKEIRELDCGETHKVYERMQNEWKMAK) the chain is on the cytoplasmic side. The helical transmembrane segment at 287–307 (VALVVIVLFIISWSPYSVVAL) threads the bilayer. Topologically, residues 308–322 (TATAGYSHFLTPYMN) are extracellular. The chain crosses the membrane as a helical span at residues 323–343 (SVPAVIAKASAIHNPIIYAIT). Lys-330 carries the N6-(retinylidene)lysine modification. The Cytoplasmic portion of the chain corresponds to 344 to 500 (HPKYRVAIAR…SDGKALLGGN (157 aa)). The tract at residues 404–428 (RWGKTRLSSASDSDSCWTESEADGS) is disordered. Positions 409–428 (RLSSASDSDSCWTESEADGS) are enriched in polar residues.

This sequence belongs to the G-protein coupled receptor 1 family. Opsin subfamily. In terms of tissue distribution, expressed in a subset of retinal horizontal cells.

Its subcellular location is the cell membrane. Photoreceptor implicated in non-image-forming responses to light. This Danio rerio (Zebrafish) protein is Melanopsin-like (opn4l).